Here is a 457-residue protein sequence, read N- to C-terminus: Phosphoglucosamine mutase (457 aa).

The Phosphoserine intermediate role is filled by Ser-106. Residues Ser-106, Asp-245, Asp-247, and Asp-249 each coordinate Mg(2+). Ser-106 carries the phosphoserine modification.

This sequence belongs to the phosphohexose mutase family. Mg(2+) is required as a cofactor. Activated by phosphorylation.

It carries out the reaction alpha-D-glucosamine 1-phosphate = D-glucosamine 6-phosphate. Catalyzes the conversion of glucosamine-6-phosphate to glucosamine-1-phosphate. This chain is Phosphoglucosamine mutase, found in Methylibium petroleiphilum (strain ATCC BAA-1232 / LMG 22953 / PM1).